The following is a 172-amino-acid chain: Putative phosphoesterase BCE_1348 (172 aa).

Residue His34 is the Proton donor of the active site. Short sequence motifs (HXTX) lie at residues 34-37 (HITL) and 115-118 (HLTI). The active-site Proton acceptor is His115.

The protein belongs to the 2H phosphoesterase superfamily. YjcG family.

The chain is Putative phosphoesterase BCE_1348 from Bacillus cereus (strain ATCC 10987 / NRS 248).